The following is an 837-amino-acid chain: Protein translocase subunit SecA (837 aa).

Residues glutamine 85, 103–107 (GEGKT), and aspartate 493 contribute to the ATP site. Cysteine 821, cysteine 823, cysteine 832, and histidine 833 together coordinate Zn(2+).

This sequence belongs to the SecA family. Monomer and homodimer. Part of the essential Sec protein translocation apparatus which comprises SecA, SecYEG and auxiliary proteins SecDF. Other proteins may also be involved. Zn(2+) is required as a cofactor.

Its subcellular location is the cell membrane. The protein resides in the cytoplasm. The catalysed reaction is ATP + H2O + cellular proteinSide 1 = ADP + phosphate + cellular proteinSide 2.. Its function is as follows. Part of the Sec protein translocase complex. Interacts with the SecYEG preprotein conducting channel. Has a central role in coupling the hydrolysis of ATP to the transfer of proteins into and across the cell membrane, serving as an ATP-driven molecular motor driving the stepwise translocation of polypeptide chains across the membrane. The protein is Protein translocase subunit SecA of Streptococcus pneumoniae (strain P1031).